Reading from the N-terminus, the 155-residue chain is UPF0178 protein RPC_3085 (155 aa).

It belongs to the UPF0178 family.

This chain is UPF0178 protein RPC_3085, found in Rhodopseudomonas palustris (strain BisB18).